The following is a 227-amino-acid chain: Uracil-DNA glycosylase (227 aa).

The Proton acceptor role is filled by Asp-64.

Belongs to the uracil-DNA glycosylase (UDG) superfamily. UNG family.

It localises to the cytoplasm. The catalysed reaction is Hydrolyzes single-stranded DNA or mismatched double-stranded DNA and polynucleotides, releasing free uracil.. Excises uracil residues from the DNA which can arise as a result of misincorporation of dUMP residues by DNA polymerase or due to deamination of cytosine. The polypeptide is Uracil-DNA glycosylase (Serratia proteamaculans (strain 568)).